A 498-amino-acid chain; its full sequence is ATP synthase subunit beta, chloroplastic (498 aa).

Residue G172–T179 participates in ATP binding.

It belongs to the ATPase alpha/beta chains family. As to quaternary structure, F-type ATPases have 2 components, CF(1) - the catalytic core - and CF(0) - the membrane proton channel. CF(1) has five subunits: alpha(3), beta(3), gamma(1), delta(1), epsilon(1). CF(0) has four main subunits: a(1), b(1), b'(1) and c(9-12).

It localises to the plastid. Its subcellular location is the chloroplast thylakoid membrane. It catalyses the reaction ATP + H2O + 4 H(+)(in) = ADP + phosphate + 5 H(+)(out). Produces ATP from ADP in the presence of a proton gradient across the membrane. The catalytic sites are hosted primarily by the beta subunits. This Sorghum bicolor (Sorghum) protein is ATP synthase subunit beta, chloroplastic.